Here is a 131-residue protein sequence, read N- to C-terminus: C-glycoside deglycosidase beta subunit (131 aa).

Belongs to the C-glycoside deglycosidase beta subunit family. Heterodimer composed of an alpha subunit (CarB1) and a beta subunit (CarC1). It depends on Mg(2+) as a cofactor.

The catalysed reaction is 3''-dehydroisovitexin = 1,5-anhydro-D-erythro-hex-1-en-3-ulose + apigenin. Its activity is regulated as follows. Activity is strongly reduced in the presence of chelating agents. Functionally, carbon-carbon bond-cleaving enzyme which participates in the metabolism of C-glycosides. Acts on the C6-glycosylated compound 3''-dehydroisovitexin (3''-oxo-isovitexin). Shows weak activity with 3''-dehydroisoorientin (3''-oxo-homoorientin) and 3'-dehydromangiferin (3'-oxo-mangiferin). The protein is C-glycoside deglycosidase beta subunit of Arthrobacter globiformis (strain ATCC 8010 / DSM 20124 / JCM 1332 / NBRC 12137 / NCIMB 8907 / NRRL B-2979 / 168).